The primary structure comprises 382 residues: MKLHEYEAKELFAKYGVKIPPGRLALTPEEVRKAAEEMGPPVVLKAQVVVAGRGKAGGIKVAKRVEEAYELSKQMFGMNIKGLTVRKLYVTKYLEVEREMYLSLIIDRATRRFLFLASPVGGMDIEEIAKTTPEKIKRVYVDPFVGLRDYHVRSIVSWLGFSPGTAQWQQAASIVQAMYKIAVDYDAELVESNPLALTKEGDVVPLDARVIVDDNALFRHPELEKALEEDPRDITEFEAYAKKIGFHYVELDGDIGIIGNGAGLTMATMDLVYHFGGRPANFLDIGGGASREVVREAVKVLLNHPRAKVIFINIFGGITRADEVAYGVKEALQAAGGTTKKIVVRMKGTNEELGRAILAEIGVPLFESAEEAAKKAVELAKL.

In terms of domain architecture, ATP-grasp spans 9–240; that stretch reads KELFAKYGVK…PRDITEFEAY (232 aa). Residues Lys45, 52 to 54, Leu94, and Glu99 each bind ATP; that span reads GRG. Positions 193 and 207 each coordinate Mg(2+). Substrate is bound by residues Asn260 and 317-319; that span reads GIT.

It belongs to the succinate/malate CoA ligase beta subunit family. In terms of assembly, heterotetramer of two alpha and two beta subunits. The cofactor is Mg(2+).

It catalyses the reaction succinate + ATP + CoA = succinyl-CoA + ADP + phosphate. The enzyme catalyses GTP + succinate + CoA = succinyl-CoA + GDP + phosphate. It functions in the pathway carbohydrate metabolism; tricarboxylic acid cycle; succinate from succinyl-CoA (ligase route): step 1/1. Succinyl-CoA synthetase functions in the citric acid cycle (TCA), coupling the hydrolysis of succinyl-CoA to the synthesis of either ATP or GTP and thus represents the only step of substrate-level phosphorylation in the TCA. The beta subunit provides nucleotide specificity of the enzyme and binds the substrate succinate, while the binding sites for coenzyme A and phosphate are found in the alpha subunit. This chain is Succinate--CoA ligase [ADP-forming] subunit beta, found in Pyrobaculum calidifontis (strain DSM 21063 / JCM 11548 / VA1).